A 530-amino-acid chain; its full sequence is Na(+)/H(+) antiporter NhaB (530 aa).

A run of 12 helical transmembrane segments spans residues 13–33, 34–54, 90–110, 121–141, 145–165, 205–225, 241–261, 306–326, 351–371, 393–413, 455–475, and 481–501; these read FLGK…VINP, LVFF…EFIF, LVAN…IYFM, ILIG…TAAF, FLDA…FYAI, LLMH…VGEP, FIIR…LTCI, GLIA…VGLI, EEAL…AVII, LALF…VFVG, GQAA…QLSY, and MALP…IFFL.

Belongs to the NhaB Na(+)/H(+) (TC 2.A.34) antiporter family.

It localises to the cell inner membrane. The catalysed reaction is 2 Na(+)(in) + 3 H(+)(out) = 2 Na(+)(out) + 3 H(+)(in). Functionally, na(+)/H(+) antiporter that extrudes sodium in exchange for external protons. In Aliivibrio fischeri (strain ATCC 700601 / ES114) (Vibrio fischeri), this protein is Na(+)/H(+) antiporter NhaB.